The primary structure comprises 500 residues: Protein nucleotidyltransferase YdiU (500 aa).

Residues G96, G98, R99, K119, D131, G132, R182, and R189 each coordinate ATP. The active-site Proton acceptor is D258. Mg(2+) is bound by residues N259 and D268. D268 is an ATP binding site.

This sequence belongs to the SELO family. Mg(2+) serves as cofactor. Requires Mn(2+) as cofactor.

The enzyme catalyses L-seryl-[protein] + ATP = 3-O-(5'-adenylyl)-L-seryl-[protein] + diphosphate. The catalysed reaction is L-threonyl-[protein] + ATP = 3-O-(5'-adenylyl)-L-threonyl-[protein] + diphosphate. It catalyses the reaction L-tyrosyl-[protein] + ATP = O-(5'-adenylyl)-L-tyrosyl-[protein] + diphosphate. It carries out the reaction L-histidyl-[protein] + UTP = N(tele)-(5'-uridylyl)-L-histidyl-[protein] + diphosphate. The enzyme catalyses L-seryl-[protein] + UTP = O-(5'-uridylyl)-L-seryl-[protein] + diphosphate. The catalysed reaction is L-tyrosyl-[protein] + UTP = O-(5'-uridylyl)-L-tyrosyl-[protein] + diphosphate. In terms of biological role, nucleotidyltransferase involved in the post-translational modification of proteins. It can catalyze the addition of adenosine monophosphate (AMP) or uridine monophosphate (UMP) to a protein, resulting in modifications known as AMPylation and UMPylation. In Rhizobium etli (strain ATCC 51251 / DSM 11541 / JCM 21823 / NBRC 15573 / CFN 42), this protein is Protein nucleotidyltransferase YdiU.